The chain runs to 252 residues: 2-succinyl-6-hydroxy-2,4-cyclohexadiene-1-carboxylate synthase (252 aa).

The protein belongs to the AB hydrolase superfamily. MenH family. Monomer.

The enzyme catalyses 5-enolpyruvoyl-6-hydroxy-2-succinyl-cyclohex-3-ene-1-carboxylate = (1R,6R)-6-hydroxy-2-succinyl-cyclohexa-2,4-diene-1-carboxylate + pyruvate. Its pathway is quinol/quinone metabolism; 1,4-dihydroxy-2-naphthoate biosynthesis; 1,4-dihydroxy-2-naphthoate from chorismate: step 3/7. The protein operates within quinol/quinone metabolism; menaquinone biosynthesis. Catalyzes a proton abstraction reaction that results in 2,5-elimination of pyruvate from 2-succinyl-5-enolpyruvyl-6-hydroxy-3-cyclohexene-1-carboxylate (SEPHCHC) and the formation of 2-succinyl-6-hydroxy-2,4-cyclohexadiene-1-carboxylate (SHCHC). This chain is 2-succinyl-6-hydroxy-2,4-cyclohexadiene-1-carboxylate synthase, found in Escherichia coli (strain SE11).